Reading from the N-terminus, the 32-residue chain is Beta-hexosaminidase (32 aa).

Residues 1–32 (GKSSSRPLGDATLGDLDFDIEVTQDYWDDLAR) enclose the GH18 domain. Glu21 acts as the Proton donor in catalysis.

This sequence belongs to the glycosyl hydrolase 18 family. Chitinase class II subfamily.

The catalysed reaction is Hydrolysis of terminal non-reducing N-acetyl-D-hexosamine residues in N-acetyl-beta-D-hexosaminides.. With respect to regulation, activity is decreased by HgCl(2) and maltose. Activity is stimulated by Na(2)SeO(4), BaCl(2), MgCl(2), chondroitin 6-sulfate and phenylmethylsulfonyl fluoride. Its function is as follows. Preferentially hydrolyzes pNP-GlcNAc, hydrolyzes pNP-GalNAc to a lesser extent. This is Beta-hexosaminidase from Palythoa caribaeorum (White encrusting zoanthid coral).